Here is a 166-residue protein sequence, read N- to C-terminus: uncharacterized protein (166 aa).

Composition is skewed to basic and acidic residues over residues 1–13, 21–112, and 119–137; these read MAEVSKKRCEHNS, KAND…KTKE, and DNVENKDKNEVYENIKEGG. The disordered stretch occupies residues 1–144; the sequence is MAEVSKKRCE…EGGSKAWNKT (144 aa). 8 repeat units span residues 31-41, 42-52, 53-63, 64-74, 75-85, 86-96, 97-107, and 108-118. The segment at 31–118 is 8 X 11 AA approximate tandem repeats of D-K-T-K-E-T-A-G/E-S-A-K; it reads DKTKETAGSA…KTKETAGNVR (88 aa).

It belongs to the LEA type 1 family.

This is an uncharacterized protein from Encephalitozoon cuniculi (strain GB-M1) (Microsporidian parasite).